A 5538-amino-acid polypeptide reads, in one-letter code: MFRALMGGGRSSDSRSTTSSSKSSSRRRTNSKASSTVSRKSSRGDDRDRGLGDLSAYSFSGSRSKRYAPSAAGDSVASSYATAEPGIAVEHDRIIIERTLKRRDTDEESGRDRYSEIRDRDGRSSRRRDRDRSQSRERERPRSERIERAQLEDDAVESRDRRRERSRTQPGDTYLPPVSPSMPIQPNSPLVYDPHVQQQFPGQFPAYVAEPYRPPNPAGEAADYYGDQGQSVADQPGVRPKPPPIIPSSQAHLMTASPVANPPPEPSSMGQVGAAAAYFADDAELEVDPAPGRPDRPTAGTTSEPPKPSNTTFGISGIAAGAAAYGAGGSLPLPASPTSPPEPVPTTAPYAPPVTSSTTKPPHTHGIGASVGAAAAGAAAGYMLGHHQHHSMSSADHLSQYTMQNYDESSQYGLGIPGPTVYNAPANAEWHAAGTGTAVPYAASPLHPHHAAVHHGAPFPSGSLAFQQRQRGPLDKFIDFWRDPEGVGMFEEYTEAIGVCKYCFEPGTSSRDAPRKHHYRQRRSSGERYASGSRVGKASRYTSSEDEGRRRKKSSRNSWLLPGLLGGIAAKALFNNKDFEDTYSVRSGRVMTVKDTESVSTARRSQTSRGVYRRRSQSRDRESRIIYSDSKSQYEDKRHRSRSRSHSSSRNRRHSALRDAAVGAAVGSGAIALAKSRDRSRSRSRSRSRFPRKSKGRKSSTSDSSSFLDISQPARKSVGGGIASFFTASSENRGKRRVKKRRSIFSFNNSSSSSLDADLAFGTGFARKPARKSTKKSSKKKDRDVDAALLGLGAAATALAATSHRRSRRAGEILVAKETRSRHSDYASSVTNDEGWEDLDSGDQSSSSVSSALAFGDTGLFGSDESQSSDSGTSKWGWRWGSKKNKKKKRASSPQGRFPTGAALAAGALGTAALASTQDRDSRLPRQHASSSSGSLQHVAPVPTNDPTLVDAVRVASLPHAEPAFVRPGPIPLQQPQPMTPVSQAVYATQGASIPTYAAPMAPPAFPPTSYIPYRPEQIQNVALGFNRPHHRSDSSPVFHTEPLEGVPAPGLKRRSTSKDQSSVQFDLTKEQADKERRMDRLEQLKRDAERASGVQLIDRDHEPTVRDDDRRSGRYEDRGYVDRRQDEPREDRYAMDSGKDKDSFSRVGAVAAGSIGAAAAATVLSGRSSVDESSETSQRRHEERRQQRRAERRRGSEPESAVSSRSKSERAQETTDYLPEERQPEPTKPPSPSRSPHKYDDYAEFFAPEELRYSPDTYKQRAPTSMPTIVEIEPASERQSREALLPAEESHPGYRDLPWPVPVLKLIEPTPPQSVSGSVRDAASPVGNPRDLPPHEEEEDVKPAARQTTGSRVSWGEHKTHEYEVPSTSSELESVDHETTREREQPHSPVLQQRYVSPKNAADDVGADIEFAAALAAATAAAGFNPALVTEDPTYHTWSSPPGSHGRVEYRDPWVETESKSRIPHGFVEGEVETPEEEKAPSSRVIEEQPLYSEPEPVSREPESQESSEPQTRTSIAQEVIDRLSEKQDERDGSRKALYGTEKSSNSGKERDESELRAQDSFSMPGGFETEELRSDPKRDVDSRDDGDVDRRSVASAPVSGEYDFSTRPRKSTQDSEYFDNGEDAGSASIEQDGSEGKKKRRKRRSKRDSDTFTDSASVESSPARIGQSSEKLKSMDDKDKEKKAGGFFSSIFGSRVSEPVDSKRSSSTDRPSRDVHSEIGRREYEESRRQRKEEKSSRRDEESGSDKENSKVRDKDGVDIENYKSSRQRREERRRRRYEDIVDSGKSGEYEKDRKLSEDNDENQSFLAEGPEMPAQIGDGDRGSGASGHVRLAEGAITGLGIGVLGQRPRGRSTPPEASERIMDPAPRSRSRPASPEPDRQEGDNQSQSSRRSSILRSKDSPTAVPLHFRRPPASPGTNRSVSVGTPTAPSPGSPTTPKRRPNSTEFKNSREMRPLWLVERHGPGHGEHKLEEPLPSLPSSKTSSANTSVEDLTALQDERSWEAVDLSHHVHGMRRLSGIDVSQSRGFEHDAFGSQHVTPTATTFEQIHPHSRKEKLKYEFHSPSELLQDPSPYGDVQPSNMGDLPSAEGSAVGVKDASSENEDSAELAAEALPPRPSTPQNNVTAASEDTETTPTQTRTVNAFEGPGFAGVVDAAVAAAVSNRLSTRPDVAIPDKSSPEDLPYDADRTHKPIADQELAATSPPAPGVPLGFAAVVDAAVAAATISIGGQPEAAKELEQSPEISEPIPQTPHPNEQETSHPTGNDSVPRDDKRRDSVDTVVPQAEEASDEKEKLDTSAVMPDLTGENKELPSEAKNENANDNSQAQTEQPPVDTDEPSSSSAKKKKKKNKKKRQSMDSNTQEPTTPVDDSTIDQGGVGISAVEDAQADAVETFEPAPKEQILVEQPASAEPTPAPEPEPTETTVDVEKAIEAPDVRKELEEEPAPAAPEDTPAEPTAETPAEDQAETSSSKKSKKKKKKKNKGSAPEENTEDPASTETPEASAANSQVVAAEQVESTLETTQPAEEEPKPTEESAIAVAENTVEPEPAPKEMEATEDPMFQDISVPGESQDSPADADNQAKELPHPEEEFQAEATHAQELPEDTEIINKTDDLSSGIDPSGQAGGDMVNEAASPEVWHDALASSPEDKNGEAEQADLKSNEPQNEGKAPVSELPALDKELSEISERPAEVDAPADTPLVDSPSTDQVEAADSGVQNEEPTPTAAELETPLSRKNSKKNKKKNKRKNTAETPVQNEAVHTADPISSIEGVPEPGPEATTTAVEEPQVTLPDEAVDENKGESRDVQAVKEETSPENAAEVANDSQPSTFEEIHLAGAEQSAPDAIAEIMGESQPAEPQDVLATAPEEPIDGQPKKKAKKKKNRKTANVSESQPESEAEAKTEKLQSAELAENPQPHIRDEVAGDSQVPPESGASEAPAGIEDVTPISAAEAVEFDLPVEKDETNGGEPHVSELNKQLNNETVPGPETGSEPVPEAGEITQSGKKSKKNKKKKQSLSLAPDETPASDPSTPAGTADGNADLPAAPEDSLKTDQEPMPEEPTVSQPIVDLVTETLNLSMAEEAVPMTAAQKKTKKEKKKKRQSALLDEPTATESIEEANAKDVTSEGTQMPLEVPSEPQSSGPTLDAIEHAEAAAEHSQEQPNKDVTLHADHSPNSDGEFVLVPEHVPYGSNDEHKTQPGSMELDVTQVNTELEKEPSTQEGVLEANEATPAETPSAADQHVQEESSPTPAMEGGAAAEELVAVEPDVLEGSQDKITEDNDTPDDSLTAKEPQTELVNAETTQKTEQGDVVLDVEAGSEGLVRDDQPVAPSKKKDKKKKKKRQSLTIDDEQRSSTKEEPTAEFSSDHVPEPSAVDESATTPSASEEQQKPETDITETVTQTAAEPTPSSASEEPENIAEAPSNESTQEPAAEEAQTAKSKKKAKKDKKKRKSVSFEIGEPLTQQSEPGHPTATPGETVTPHEGPKPGDKPTSPKDSSEEFQSGEAVPESPQDSAGIVTQPEQPEPTAEATVVTEQHKQVTEPSLVSINEEQAVVEETVAPPVVDEASQLQEQKVSSETLWSETQRDVVKSFQDAESLEEEKGETAVSPSLENNEGTKPGAWVEQAEFEPQTPTDDGEQGVGPSKSKKNKKKKKRNTLESTEDVPVIPPGPSKIELLESTPVLETEETHDIVEPDTTVSENVHEEEKPEDEFGGFMSAKAKKKAKKKDKKRQSKILDSANDATNTAESAPDISEQAPLETASGEADGPDATFSQETSETISTEAKSSEPSPETALTPAEDDGKENQSHDTEPHGGNDKDLTWTDHMVSSQVEQQQGTPSDRPSEPAPETEPISTREAATSIDVEQLDNNADDASPAVNDRLERSGEEGTRVKKEIVSEEPEVQYEGLLEIPREEKAEISSQGEDTIQVKSDAEVEESVKATVEGTPEDSMSQEDAPISVLDGGDATTKDQFTSIEVNDPSQSKDILEPENEELPLPIPGKKKKAQQETKIDETSQDDSVDAVQEESPTSREMTDTGLPVAESQADPIAEPFHELPEPQKAVEIAVEDKSMQETLKFKQDVTPAEDVFQEPPALGRKKSKKDKKKDLLAQNTAVESRENKFKEKQLATEEPLITPSDARTTVLATPVFTQALETPTKTTVDAGERELHLSAVQSTVPVEDNINALETSGAQTLESFRTLEAPEQPLERNILLNDYAAKTPEELPAVEKSATYETATEPIIEEAALSHKNSKKKSKKAKKQAQEQQEKSTTPTPAEHGEESIVETTAAIPSTPGPAENSDDIPEANISEEQVAQLEHSEQLVLSDAARPQERLGQTPNMDNQTDDVQSTEQGKEGNVQAEPRQVESEDPIESQPGSTAAVARKLSKKDRRKAKKKSAKDAIEPSDEPELRNPTEPIGASCSTSNQAKIDQDQFLTVASDKQMVEEVPRPLEVEPAASEVYQGATDENDWPAIDWEKGKVEFKEQTPLSSPEAHAVPFEPAIAEFDETAIPEGLLRRQSLSREEQLAGGKDGSSQHTRADEIAAPQEGAVMIEPSAVAETEQSAGLQAKSVSSQGAPKTIQDDMQHPENRLARDQTKSETGVVPSKQSKIGSIFPDLERGSFRRPVPGQVLMPVKDRAEDETIDQNADDNSAIKVSEAPIPAGEPEESHLQSQQDEKGPEPTTTVSTLDLSLEEPTKMQDTSNTPVNLAVDIEVDPSYNVSVISDGLVNETKSIEIEWKTDGDKGTQEAETPLYAPLPVHEQKSSLVSQASPLDMDRDEPIPRNDSSCGLRRSPSIHGRHNHPPRTWSLEDTPITKAVTPPLFGGPVGATADMSSPPRTPLQPIAEQEPEVRVEQASGFRSMVSEHGTPRLEMKPEHVLPRPETPIRKFTDNALARQTWPVAENDIFKSSEDEDAALTVKKQRPGNKWPAEVLKTPDKGMPILRPSSVSSVKSVQSTHSVTGGQRSLRRTSRNTSGDLRAASQAQESHGTQPHATPQPPQPPPSDLNIEHIASSSSYDPVTDKGKRPIRAMTDVYEGWGESPSSPRSPSRPPSIRHRRSMQHLQELEARLDQLISENRLLIAAREAAEDKLRNASVARRKSDHTLNERSADLRDREAEVEKLKKSVEWLQKEVTRLTEENEGLITTNSNLTAAHAKEIESVRESSSRQLDDLRSRYEQLSMEVQNTVRHEIETALARKDNELRRLREELETARDKVSQLQQQIAASLHDNVLVFRDEDYFDAACQKLCGHVQQWVLRFSKHSDHRRCRKLAEIQDEKIADRFDNAILDGYDTDTYLADRVRRRDIFMSVVMTMVWEFVFTRYLFGMDREQRQKLKSLEKQLNEVGPRSAVHRWRAITLTLLSKRPAFARQRESDTEAVALEIFETLSRLLPPPSHVEVQLLESLRKVLRVAVNLSIEMRTQLAEYIMLPPLQPEYDTNGDLARQVYFNASLMNERSGETTSNEELESQQAVVRVVLFPLVVKKGNDTGEGEDEVVVCPAQVLVARPDKDPRASKIFSSDRMSLDGTKSVHSVAPSSTMDISNVI.

The segment covering 1–10 (MFRALMGGGR) has biased composition (gly residues). Disordered regions lie at residues 1–270 (MFRA…SSMG), 286–315 (EVDP…TFGI), 331–365 (LPLP…PHTH), 510–555 (SRDA…KKSS), 596–712 (TESV…DISQ), 800–901 (AATS…FPTG), 913–944 (ALAS…PVPT), 1027–1145 (NRPH…KDSF), 1164–1297 (VLSG…GYRD), 1310–1398 (PTPP…RYVS), 1432–1993 (EDPT…TSVE), 2067–2146 (SELL…VNAF), 2165–2207 (NRLS…SPPA), 2233–3065 (PEAA…SQPI), 3077–3894 (MAEE…EIVS), 3910–4034 (EEKA…DTGL), 4072–4128 (KFKQ…EEPL), 4238–4421 (EAAL…SNQA), 4442–4463 (PRPL…DEND), 4509–4698 (LRRQ…TSNT), 4733–4850 (KTDG…VEQA), and 4910–5052 (ALTV…RHRR). The woronin bodies-binding region stretch occupies residues 1 to 1100 (MFRALMGGGR…RASGVQLIDR (1100 aa)). A compositionally biased stretch (low complexity) spans 14–23 (SRSTTSSSKS). Basic and acidic residues-rich tracts occupy residues 42 to 51 (SRGDDRDRGL) and 89 to 167 (VEHD…ERSR). The span at 299 to 313 (AGTTSEPPKPSNTTF) shows a compositional bias: polar residues. The segment covering 334–352 (PASPTSPPEPVPTTAPYAP) has biased composition (pro residues). Basic residues predominate over residues 514 to 523 (PRKHHYRQRR). Over residues 598 to 607 (SVSTARRSQT) the composition is skewed to polar residues. Positions 639–655 (HRSRSRSHSSSRNRRHS) are enriched in basic residues. Low complexity predominate over residues 660 to 674 (AAVGAAVGSGAIALA). Basic residues predominate over residues 682 to 698 (SRSRSRSRFPRKSKGRK). Positions 809-825 (RAGEILVAKETRSRHSD) are enriched in basic and acidic residues. Composition is skewed to low complexity over residues 842–851 (GDQSSSSVSS) and 862–880 (GSDE…GWRW). The segment covering 881 to 891 (GSKKNKKKKRA) has biased composition (basic residues). Composition is skewed to basic and acidic residues over residues 1068–1091 (LTKE…DAER), 1098–1145 (IDRD…KDSF), 1178–1198 (SQRR…RGSE), 1207–1226 (SKSE…RQPE), 1356–1365 (WGEHKTHEYE), 1375–1387 (SVDH…REQP), 1447–1462 (GRVE…ESKS), and 1478–1488 (EEKAPSSRVIE). Residues 1506–1516 (QESSEPQTRTS) are compositionally biased toward low complexity. Basic and acidic residues-rich tracts occupy residues 1521–1536 (VIDR…DGSR), 1549–1559 (GKERDESELRA), and 1572–1594 (EELR…DRRS). Positions 1639 to 1648 (KKKRRKRRSK) are enriched in basic residues. 3 stretches are compositionally biased toward basic and acidic residues: residues 1672–1686 (EKLK…EKKA), 1700–1773 (EPVD…QRRE), and 1788–1800 (KSGE…KLSE). Composition is skewed to low complexity over residues 1867–1876 (PAPRSRSRPA) and 1889–1898 (SQSSRRSSIL). The span at 1950 to 1975 (KNSREMRPLWLVERHGPGHGEHKLEE) shows a compositional bias: basic and acidic residues. Composition is skewed to polar residues over residues 1984–1993 (KTSSANTSVE) and 2121–2130 (TPQNNVTAAS). 3 stretches are compositionally biased toward basic and acidic residues: residues 2187-2196 (DADRTHKPIA), 2269-2279 (VPRDDKRRDSV), and 2307-2320 (GENK…KNEN). Residues 2321–2331 (ANDNSQAQTEQ) show a composition bias toward polar residues. Basic residues predominate over residues 2344–2355 (AKKKKKKNKKKR). The segment covering 2358 to 2370 (MDSNTQEPTTPVD) has biased composition (polar residues). The segment covering 2427–2441 (DVEKAIEAPDVRKEL) has biased composition (basic and acidic residues). Low complexity predominate over residues 2449 to 2461 (APEDTPAEPTAET). Basic residues predominate over residues 2473 to 2484 (KKSKKKKKKKNK). Residues 2494–2525 (DPASTETPEASAANSQVVAAEQVESTLETTQP) show a composition bias toward polar residues. Basic and acidic residues-rich tracts occupy residues 2580 to 2590 (NQAKELPHPEE), 2647 to 2661 (PEDK…DLKS), and 2677 to 2691 (ALDK…RPAE). Residues 2719–2734 (EEPTPTAAELETPLSR) are compositionally biased toward low complexity. The span at 2735–2747 (KNSKKNKKKNKRK) shows a compositional bias: basic residues. Residues 2796 to 2812 (DENKGESRDVQAVKEET) are compositionally biased toward basic and acidic residues. Residues 2874 to 2884 (KKKAKKKKNRK) are compositionally biased toward basic residues. Residues 2885–2894 (TANVSESQPE) are compositionally biased toward polar residues. Basic residues-rich tracts occupy residues 3003–3013 (KKSKKNKKKKQ) and 3089–3100 (KKTKKEKKKKRQ). Residues 3145–3172 (AIEHAEAAAEHSQEQPNKDVTLHADHSP) show a composition bias toward basic and acidic residues. Positions 3248–3268 (PAMEGGAAAEELVAVEPDVLE) are enriched in low complexity. Residues 3293–3303 (ELVNAETTQKT) are compositionally biased toward polar residues. Residues 3329-3341 (SKKKDKKKKKKRQ) are compositionally biased toward basic residues. Over residues 3347 to 3367 (DEQRSSTKEEPTAEFSSDHVP) the composition is skewed to basic and acidic residues. Composition is skewed to low complexity over residues 3397–3409 (TQTA…SSAS) and 3422–3435 (ESTQ…AQTA). A compositionally biased stretch (basic residues) spans 3436–3450 (KSKKKAKKDKKKRKS). Residues 3480–3495 (EGPKPGDKPTSPKDSS) show a composition bias toward basic and acidic residues. The span at 3547–3564 (EEQAVVEETVAPPVVDEA) shows a compositional bias: low complexity. Polar residues-rich tracts occupy residues 3565–3580 (SQLQ…LWSE) and 3604–3613 (VSPSLENNEG). Basic residues-rich tracts occupy residues 3642-3652 (KSKKNKKKKKR) and 3716-3730 (KAKK…KRQS). Polar residues predominate over residues 3768–3787 (TFSQETSETISTEAKSSEPS). The segment covering 3800-3819 (KENQSHDTEPHGGNDKDLTW) has biased composition (basic and acidic residues). Polar residues predominate over residues 3823-3837 (MVSSQVEQQQGTPSD). The segment covering 3876–3893 (DRLERSGEEGTRVKKEIV) has biased composition (basic and acidic residues). Composition is skewed to polar residues over residues 3915–3925 (ISSQGEDTIQV) and 3965–3980 (KDQF…SQSK). Residues 4010–4020 (TSQDDSVDAVQ) are compositionally biased toward acidic residues. A compositionally biased stretch (basic and acidic residues) spans 4111–4123 (ESRENKFKEKQLA). The segment covering 4244-4255 (KNSKKKSKKAKK) has biased composition (basic residues). A compositionally biased stretch (polar residues) spans 4328 to 4345 (LGQTPNMDNQTDDVQSTE). The segment covering 4378 to 4391 (KLSKKDRRKAKKKS) has biased composition (basic residues). Over residues 4392–4406 (AKDAIEPSDEPELRN) the composition is skewed to basic and acidic residues. The segment at 4495 to 5538 (AIAEFDETAI…SSTMDISNVI (1044 aa)) is septal pore-binding region. The span at 4554 to 4570 (TEQSAGLQAKSVSSQGA) shows a compositional bias: polar residues. Composition is skewed to basic and acidic residues over residues 4574-4591 (IQDD…DQTK) and 4660-4673 (EESH…EKGP). Residues 4940–4954 (SSVSSVKSVQSTHSV) show a composition bias toward low complexity. Polar residues predominate over residues 4966 to 4988 (RNTSGDLRAASQAQESHGTQPHA). Positions 4989-4998 (TPQPPQPPPS) are enriched in pro residues. A coiled-coil region spans residues 5050–5223 (HRRSMQHLQE…QQQIAASLHD (174 aa)).

Binds directly or indirectly to the Woronin body major protein hexA.

It localises to the cell septum. Functionally, acts as the tether and is essential for anchoring of Woronin bodies at the septal pore. In damaged hyphae, Woronin bodies occlude septal pores in order to separate intact from damaged compartments. This Aspergillus fumigatus (strain ATCC MYA-4609 / CBS 101355 / FGSC A1100 / Af293) (Neosartorya fumigata) protein is Leashin.